The following is a 281-amino-acid chain: Protein EMBRYO DEFECTIVE 1674 (281 aa).

Composition is skewed to polar residues over residues 1 to 14 (MTTT…QSLS) and 24 to 41 (PNTS…PNSS). Residues 1–47 (MTTTRAKSKFQSLSACRFTPLPEPNTSPSTYSKTLPKPNSSPGTDGT) form a disordered region. Positions 66–153 (VTLSDWWLTK…LGFPYDWEDY (88 aa)) constitute an SANTA domain.

Functionally, required for normal embryo development. This is Protein EMBRYO DEFECTIVE 1674 from Arabidopsis thaliana (Mouse-ear cress).